A 595-amino-acid chain; its full sequence is Myb-like protein D (595 aa).

4 disordered regions span residues 1-47 (MQQQ…NGLV), 55-74 (QQYQ…DEGE), 82-266 (DESQ…NNRK), and 319-445 (VLQK…IWTQ). The segment covering 19–47 (DNYNNNNSNINTNNNNSINDYENQNNGLV) has biased composition (low complexity). Residues 60-74 (DQNDSFDDDSMDEGE) are compositionally biased toward acidic residues. Composition is skewed to low complexity over residues 90 to 212 (NNNN…ENNN) and 225 to 264 (NNNN…NNNN). Residues 324–348 (TLNRNRSRSRSRSNSRSHSRSRSRS) are compositionally biased toward basic residues. 2 stretches are compositionally biased toward low complexity: residues 349-368 (RSLS…YSRS) and 376-420 (NNNN…NNNN). The span at 423 to 434 (RKSEDDNQDDGK) shows a compositional bias: basic and acidic residues. The HTH myb-type domain occupies 435–489 (KKHRKNAIWTQEEDEKMAQLYNKYGKSWKAIHSHFDDKTREQVQSHGQYLIRIGK). The H-T-H motif DNA-binding region spans 462–485 (WKAIHSHFDDKTREQVQSHGQYLI). Positions 494-595 (HRDGRKERRK…NSSNYVNNDN (102 aa)) are disordered. Low complexity predominate over residues 517–595 (QQNQQNNNNN…NSSNYVNNDN (79 aa)).

It localises to the nucleus. In Dictyostelium discoideum (Social amoeba), this protein is Myb-like protein D (mybD).